The following is a 73-amino-acid chain: Maltose-binding periplasmic protein (73 aa).

The N-terminal stretch at 1-30 (MMTKTNLKMGARTLALSVLATLVLSASALA) is a signal peptide.

Belongs to the bacterial solute-binding protein 1 family.

The protein localises to the periplasm. Involved in the high-affinity maltose membrane transport system. Initial receptor for the active transport of and chemotaxis toward maltooligosaccharides. This is Maltose-binding periplasmic protein (malE) from Photorhabdus luminescens (Xenorhabdus luminescens).